A 98-amino-acid chain; its full sequence is uncharacterized protein (98 aa).

One can recognise an STAS domain in the interval 1–85 (MLETVPVRCV…GTLKQALENM (85 aa)).

Phosphorylated on threonine residue(s). Phosphorylated by PrkC and dephosphorylated by PrpC.

The protein localises to the cytoplasm. This is an uncharacterized protein from Bacillus subtilis (strain 168).